Reading from the N-terminus, the 632-residue chain is Extracellular metalloproteinase 2 (632 aa).

The N-terminal stretch at 1–19 is a signal peptide; the sequence is MHGLLLAGLAVALPLGVAG. Residues 20–244 constitute a propeptide that is removed on maturation; it reads HPARPQTALS…VHNVVDYVAS (225 aa). The N-linked (GlcNAc...) asparagine glycan is linked to Asn270. The span at 294-310 shows a compositional bias: polar residues; sequence NNVAAQDNPSGGSQWEN. The disordered stretch occupies residues 294-313; it reads NNVAAQDNPSGGSQWENNYR. His429 provides a ligand contact to Zn(2+). Residue Glu430 is part of the active site. Position 433 (His433) interacts with Zn(2+).

The protein belongs to the peptidase M36 family. Zn(2+) is required as a cofactor.

The protein resides in the secreted. In terms of biological role, secreted metalloproteinase probably acting as a virulence factor. This is Extracellular metalloproteinase 2 (MEP2) from Arthroderma otae (Microsporum canis).